The following is a 452-amino-acid chain: Tol-Pal system protein TolB (452 aa).

The first 31 residues, 1 to 31 (MCGVRRGMGVLLLFCAVALCAMPFVVRSVWG), serve as a signal peptide directing secretion.

The protein belongs to the TolB family. The Tol-Pal system is composed of five core proteins: the inner membrane proteins TolA, TolQ and TolR, the periplasmic protein TolB and the outer membrane protein Pal. They form a network linking the inner and outer membranes and the peptidoglycan layer.

Its subcellular location is the periplasm. Its function is as follows. Part of the Tol-Pal system, which plays a role in outer membrane invagination during cell division and is important for maintaining outer membrane integrity. This Syntrophus aciditrophicus (strain SB) protein is Tol-Pal system protein TolB.